Here is a 315-residue protein sequence, read N- to C-terminus: Glutaminase (315 aa).

Substrate is bound by residues serine 70, asparagine 120, glutamate 166, asparagine 173, tyrosine 197, tyrosine 249, and valine 267.

This sequence belongs to the glutaminase family. In terms of assembly, homotetramer.

The enzyme catalyses L-glutamine + H2O = L-glutamate + NH4(+). This is Glutaminase from Rhizobium meliloti (strain 1021) (Ensifer meliloti).